The sequence spans 995 residues: Polynucleotide 5'-hydroxyl-kinase NOL9 (995 aa).

Disordered stretches follow at residues 18–173 and 271–359; these read EQRE…SSMK and IKVF…YEPP. Low complexity-rich tracts occupy residues 75-94 and 110-129; these read TAGA…SSPS and VNKS…KSAK. Positions 279–354 are enriched in acidic residues; sequence EETDSDEDDI…DIFDTDDLDS (76 aa). 639–646 contributes to the ATP binding site; it reads GGKGVGKS.

This sequence belongs to the Clp1 family. NOL9/GRC3 subfamily.

It localises to the nucleus. The protein resides in the nucleolus. Functionally, polynucleotide 5'-kinase involved in rRNA processing. In Drosophila melanogaster (Fruit fly), this protein is Polynucleotide 5'-hydroxyl-kinase NOL9.